The following is a 785-amino-acid chain: Protein PHTF2 (785 aa).

One can recognise a PHTF domain in the interval 46 to 191; the sequence is IQCLIGAYDQ…VHCQIVSTRT (146 aa). The next 2 membrane-spanning stretches (helical) occupy residues 136–156 and 164–184; these read VIFF…VLFC and IPLT…TVHC. Disordered regions lie at residues 190-239 and 304-401; these read RTPK…GTST and RPEE…PESE. Residues 200-209 show a composition bias toward basic residues; it reads GKRRRKLRKA. Positions 210 to 219 are enriched in basic and acidic residues; the sequence is AHLEVHREGD. 2 stretches are compositionally biased toward polar residues: residues 220-239 and 309-333; these read GSST…GTST and AWNT…VSDE. A glycan (N-linked (GlcNAc...) asparagine) is linked at N329. Residues 359–369 show a composition bias toward basic residues; it reads RNRKSHHYKKH. Residues 378–390 are compositionally biased toward low complexity; the sequence is SGTSCSSRCSSSR. Positions 391–400 are enriched in basic and acidic residues; the sequence is QDSESARPES. The next 4 membrane-spanning stretches (helical) occupy residues 497-517, 553-573, 634-654, and 668-688; these read IGYQ…PFVF, VIIS…LLCV, VIVS…CAQL, and WELV…VTLG. N-linked (GlcNAc...) asparagine glycosylation is found at N697 and N756. The chain crosses the membrane as a helical span at residues 760–780; sequence VVILSAVSGVISDLLGFNLKL.

It is found in the membrane. This chain is Protein PHTF2 (PHTF2), found in Homo sapiens (Human).